The sequence spans 177 residues: Peptidoglycan-associated lipoprotein (177 aa).

Positions 1-32 are cleaved as a signal peptide; it reads MSRTNISALSPMQKLARNPAVIAMTLALALAG. Residue Cys33 is the site of N-palmitoyl cysteine attachment. Cys33 carries the S-diacylglycerol cysteine lipid modification. The region spanning 59 to 176 is the OmpA-like domain; sequence QQDFTVNVGD…RAVTVLGGAG (118 aa).

The protein belongs to the Pal lipoprotein family. In terms of assembly, the Tol-Pal system is composed of five core proteins: the inner membrane proteins TolA, TolQ and TolR, the periplasmic protein TolB and the outer membrane protein Pal. They form a network linking the inner and outer membranes and the peptidoglycan layer.

The protein resides in the cell outer membrane. In terms of biological role, part of the Tol-Pal system, which plays a role in outer membrane invagination during cell division and is important for maintaining outer membrane integrity. The polypeptide is Peptidoglycan-associated lipoprotein (Agrobacterium fabrum (strain C58 / ATCC 33970) (Agrobacterium tumefaciens (strain C58))).